A 195-amino-acid polypeptide reads, in one-letter code: Calcineurin B homologous protein 1 (195 aa).

The N-myristoyl glycine moiety is linked to residue glycine 2. Residues 2–6 carry the Necessary for association with microtubule and interaction with GAPDH motif; the sequence is GSRAS. 4 EF-hand domains span residues 26–61, 66–101, 110–145, and 151–186; these read SQIT…AINP, IINA…KSKD, SRSN…MVGV, and QLGS…VDVE. 5 residues coordinate Ca(2+): aspartate 123, aspartate 125, aspartate 127, lysine 129, and glutamate 134. The Nuclear export signal 1 signature appears at 138 to 147; the sequence is VLRMMVGVNI. The Ca(2+) site is built by aspartate 164, aspartate 166, aspartate 168, and glutamate 175. The Nuclear export signal 2 signature appears at 176 to 185; sequence FVKVLEKVDV.

It belongs to the calcineurin regulatory subunit family. CHP subfamily. As to quaternary structure, monomer. Interacts with STK17B; the interaction occurs in a calcium-independent manner and induces the translocation of CHP1 from the Golgi to the nucleus. Interacts with GAPDH; the interaction is direct, occurs in a N-myristoylation-dependent manner and facilitates the ability of CHP1 to bind microtubules. Interacts with KIF1B (via the C-terminal end of the kinesin-motor domain); the interaction occurs in a calcium-dependent manner. Associates (via C-terminal domain) with microtubules; the association occurs with polymerized microtubules during the cell cycle in a myristoylation- and calcium-independent manner and is enhanced by GAPDH. Interacts with PPP3CA. Interacts with SLC9A1/NHE1 (via the cytoplasmic C-terminal domain); the interaction occurs at the plasma membrane in a calcium-dependent manner and at a domain that is critical for growth factor stimulation of the exchanger. Interacts with SLC9A3; increases SLC9A3 trafficking and activity at the plasma membrane. Phosphorylated; decreased phosphorylation is associated with an increase in SLC9A1/NHE1 Na(+)/H(+) exchange activity. Phosphorylation occurs in serum-dependent manner. The phosphorylation state may regulate the binding to SLC9A1/NHE1. Post-translationally, both N-myristoylation and calcium-mediated conformational changes are essential for its function in exocytic traffic. N-myristoylation is required for its association with microtubules and interaction with GAPDH, but not for the constitutive association to membranes.

It localises to the nucleus. The protein resides in the cytoplasm. The protein localises to the cytoskeleton. It is found in the endomembrane system. Its subcellular location is the endoplasmic reticulum-Golgi intermediate compartment. It localises to the endoplasmic reticulum. The protein resides in the cell membrane. The protein localises to the membrane. In terms of biological role, calcium-binding protein involved in different processes such as regulation of vesicular trafficking, plasma membrane Na(+)/H(+) exchanger and gene transcription. Involved in the constitutive exocytic membrane traffic. Mediates the association between microtubules and membrane-bound organelles of the endoplasmic reticulum and Golgi apparatus and is also required for the targeting and fusion of transcytotic vesicles (TCV) with the plasma membrane. Functions as an integral cofactor in cell pH regulation by controlling plasma membrane-type Na(+)/H(+) exchange activity. Affects the pH sensitivity of SLC9A1/NHE1 by increasing its sensitivity at acidic pH. Required for the stabilization and localization of SLC9A1/NHE1 at the plasma membrane. Inhibits serum- and GTPase-stimulated Na(+)/H(+) exchange. Plays a role as an inhibitor of ribosomal RNA transcription by repressing the nucleolar UBF1 transcriptional activity. May sequester UBF1 in the nucleoplasm and limit its translocation to the nucleolus. Associates to the ribosomal gene promoter. Acts as a negative regulator of the calcineurin/NFAT signaling pathway. Inhibits NFAT nuclear translocation and transcriptional activity by suppressing the calcium-dependent calcineurin phosphatase activity. Also negatively regulates the kinase activity of the apoptosis-induced kinase STK17B. Inhibits both STK17B auto- and substrate-phosphorylations in a calcium-dependent manner. This chain is Calcineurin B homologous protein 1 (CHP1), found in Bos taurus (Bovine).